A 401-amino-acid chain; its full sequence is NALCN channel auxiliary factor 2 (401 aa).

A helical transmembrane segment spans residues 42 to 62 (LASLLFFTALLSDHLWLCAGG). Residues N77, N97, N153, and N178 are each glycosylated (N-linked (GlcNAc...) asparagine). Residues 362–382 (LCVLVLFLLHTFISITTLQHC) traverse the membrane as a helical segment.

The protein belongs to the NALF family.

The protein localises to the membrane. Its function is as follows. Probable component of the NALCN channel complex, a channel that regulates the resting membrane potential and controls neuronal excitability. The polypeptide is NALCN channel auxiliary factor 2 (nalf2) (Danio rerio (Zebrafish)).